A 443-amino-acid polypeptide reads, in one-letter code: Methylenetetrahydrofolate--tRNA-(uracil-5-)-methyltransferase TrmFO (443 aa).

Position 8 to 13 (8 to 13 (GAGLAG)) interacts with FAD.

The protein belongs to the MnmG family. TrmFO subfamily. FAD serves as cofactor.

It is found in the cytoplasm. The catalysed reaction is uridine(54) in tRNA + (6R)-5,10-methylene-5,6,7,8-tetrahydrofolate + NADH + H(+) = 5-methyluridine(54) in tRNA + (6S)-5,6,7,8-tetrahydrofolate + NAD(+). It catalyses the reaction uridine(54) in tRNA + (6R)-5,10-methylene-5,6,7,8-tetrahydrofolate + NADPH + H(+) = 5-methyluridine(54) in tRNA + (6S)-5,6,7,8-tetrahydrofolate + NADP(+). Functionally, catalyzes the folate-dependent formation of 5-methyl-uridine at position 54 (M-5-U54) in all tRNAs. This is Methylenetetrahydrofolate--tRNA-(uracil-5-)-methyltransferase TrmFO from Thermus thermophilus (strain ATCC 27634 / DSM 579 / HB8).